Consider the following 223-residue polypeptide: PKHD-type hydroxylase CPS_3426 (223 aa).

Positions 77-175 (KSMMPFIISE…RKVALTWIES (99 aa)) constitute a Fe2OG dioxygenase domain. Fe cation-binding residues include His-96, Asp-98, and His-156. Residue Arg-166 participates in 2-oxoglutarate binding.

It depends on Fe(2+) as a cofactor. L-ascorbate is required as a cofactor.

This chain is PKHD-type hydroxylase CPS_3426, found in Colwellia psychrerythraea (strain 34H / ATCC BAA-681) (Vibrio psychroerythus).